Consider the following 511-residue polypeptide: Pickpocket protein 19 (511 aa).

The next 2 membrane-spanning stretches (helical) occupy residues 59-79 and 471-491; these read LWLA…TVLM and GIIS…LFVL.

Belongs to the amiloride-sensitive sodium channel (TC 1.A.6) family. Expressed in the tracheal system. Expressed in the taste-sensing terminal organ of the larval head. In adults, expressed in hairs on the tibia, femur and wing margin, but not in hairs on the tarsi of the leg.

The protein localises to the membrane. Part of a complex that plays a role in tracheal liquid clearance. In both larvae and adults, contributes to the behavioral response to salt. Probable role in sodium transport. This is Pickpocket protein 19 (ppk19) from Drosophila melanogaster (Fruit fly).